Consider the following 341-residue polypeptide: Phosphoribosylformylglycinamidine cyclo-ligase (341 aa).

It belongs to the AIR synthase family.

Its subcellular location is the cytoplasm. It catalyses the reaction 2-formamido-N(1)-(5-O-phospho-beta-D-ribosyl)acetamidine + ATP = 5-amino-1-(5-phospho-beta-D-ribosyl)imidazole + ADP + phosphate + H(+). The protein operates within purine metabolism; IMP biosynthesis via de novo pathway; 5-amino-1-(5-phospho-D-ribosyl)imidazole from N(2)-formyl-N(1)-(5-phospho-D-ribosyl)glycinamide: step 2/2. This chain is Phosphoribosylformylglycinamidine cyclo-ligase, found in Synechococcus elongatus (strain ATCC 33912 / PCC 7942 / FACHB-805) (Anacystis nidulans R2).